Here is a 319-residue protein sequence, read N- to C-terminus: Dehydrogenase/reductase SDR family member 9 (319 aa).

An N-terminal signal peptide occupies residues 1–20 (MLFWLLALLFLCAFLWNYKG). Residues 34–58 (ITGCDTGFGNLAARTFDKKGFRVIA) and Asp-83 each bind NAD(+). Residue Ser-164 participates in substrate binding. The active-site Proton acceptor is Tyr-176. Lys-180 contacts NAD(+).

This sequence belongs to the short-chain dehydrogenases/reductases (SDR) family. As to quaternary structure, homotetramer.

Its subcellular location is the microsome membrane. The protein localises to the endoplasmic reticulum membrane. The enzyme catalyses 3beta-hydroxy-5alpha-pregnane-20-one + NAD(+) = 5alpha-pregnane-3,20-dione + NADH + H(+). The catalysed reaction is 17beta-hydroxy-5alpha-androstan-3-one + NAD(+) = 5alpha-androstan-3,17-dione + NADH + H(+). It carries out the reaction androsterone + NAD(+) = 5alpha-androstan-3,17-dione + NADH + H(+). It catalyses the reaction 5alpha-androstane-3alpha,17beta-diol + NAD(+) = 17beta-hydroxy-5alpha-androstan-3-one + NADH + H(+). The enzyme catalyses all-trans-retinol + NAD(+) = all-trans-retinal + NADH + H(+). The catalysed reaction is 3alpha-hydroxy-5alpha-pregnan-20-one + NAD(+) = 5alpha-pregnane-3,20-dione + NADH + H(+). Functionally, 3-alpha-hydroxysteroid dehydrogenase that converts 3-alpha-tetrahydroprogesterone (allopregnanolone) to dihydroxyprogesterone and 3-alpha-androstanediol to dihydroxyprogesterone. Also plays a role in the biosynthesis of retinoic acid. Can utilize both NADH and NADPH. This is Dehydrogenase/reductase SDR family member 9 (Dhrs9) from Mus musculus (Mouse).